The following is a 240-amino-acid chain: Large ribosomal subunit protein bL25 (240 aa).

Disordered stretches follow at residues 1-20 (MAENVLSAQKRTEQGKGPAR) and 220-240 (PAAGAAPAKGGEAKGGDKGKK). The segment covering 220-229 (PAAGAAPAKG) has biased composition (low complexity). Residues 230 to 240 (GEAKGGDKGKK) are compositionally biased toward basic and acidic residues.

Belongs to the bacterial ribosomal protein bL25 family. CTC subfamily. As to quaternary structure, part of the 50S ribosomal subunit; part of the 5S rRNA/L5/L18/L25 subcomplex. Contacts the 5S rRNA. Binds to the 5S rRNA independently of L5 and L18.

This is one of the proteins that binds to the 5S RNA in the ribosome where it forms part of the central protuberance. In Anaeromyxobacter dehalogenans (strain 2CP-C), this protein is Large ribosomal subunit protein bL25.